The primary structure comprises 76 residues: Conotoxin Im6.9 (76 aa).

The N-terminal stretch at methionine 1–alanine 19 is a signal peptide. Residues leucine 20–arginine 45 constitute a propeptide that is removed on maturation. Intrachain disulfides connect cysteine 51-cysteine 65, cysteine 58-cysteine 69, and cysteine 64-cysteine 73.

The protein belongs to the conotoxin O2 superfamily. As to expression, expressed by the venom duct.

The protein localises to the secreted. In terms of biological role, probable neurotoxin. This is Conotoxin Im6.9 from Conus imperialis (Imperial cone).